We begin with the raw amino-acid sequence, 183 residues long: Regulatory protein RecX (183 aa).

The span at 1–12 (MTSFPHPSTSES) shows a compositional bias: polar residues. The interval 1-26 (MTSFPHPSTSESGPDPDSEPNREEQA) is disordered.

It belongs to the RecX family.

The protein resides in the cytoplasm. Modulates RecA activity. The chain is Regulatory protein RecX from Mycobacterium sp. (strain JLS).